The chain runs to 117 residues: Large ribosomal subunit protein uL22 (117 aa).

It belongs to the universal ribosomal protein uL22 family. As to quaternary structure, part of the 50S ribosomal subunit.

Its function is as follows. This protein binds specifically to 23S rRNA; its binding is stimulated by other ribosomal proteins, e.g. L4, L17, and L20. It is important during the early stages of 50S assembly. It makes multiple contacts with different domains of the 23S rRNA in the assembled 50S subunit and ribosome. Functionally, the globular domain of the protein is located near the polypeptide exit tunnel on the outside of the subunit, while an extended beta-hairpin is found that lines the wall of the exit tunnel in the center of the 70S ribosome. The protein is Large ribosomal subunit protein uL22 of Synechococcus elongatus (strain ATCC 33912 / PCC 7942 / FACHB-805) (Anacystis nidulans R2).